The primary structure comprises 130 residues: Small ribosomal subunit protein uS9 (130 aa).

The protein belongs to the universal ribosomal protein uS9 family.

The polypeptide is Small ribosomal subunit protein uS9 (Phytoplasma australiense).